We begin with the raw amino-acid sequence, 322 residues long: Ribosomal RNA small subunit methyltransferase H (322 aa).

S-adenosyl-L-methionine is bound by residues 42–44 (GGH), Asp-62, Phe-86, Asp-107, and Gln-114.

This sequence belongs to the methyltransferase superfamily. RsmH family.

The protein localises to the cytoplasm. It catalyses the reaction cytidine(1402) in 16S rRNA + S-adenosyl-L-methionine = N(4)-methylcytidine(1402) in 16S rRNA + S-adenosyl-L-homocysteine + H(+). In terms of biological role, specifically methylates the N4 position of cytidine in position 1402 (C1402) of 16S rRNA. The sequence is that of Ribosomal RNA small subunit methyltransferase H from Janthinobacterium sp. (strain Marseille) (Minibacterium massiliensis).